Consider the following 898-residue polypeptide: Cip1-interacting zinc finger protein (898 aa).

3 disordered regions span residues 48 to 69, 157 to 305, and 318 to 471; these read QAPL…QPLL, QSLL…ALEA, and VQAQ…QPQV. Residues 170 to 203 show a composition bias toward polar residues; it reads NPSQFNLSGRNPQKQARTSSSTTPNRKDSSSQTM. Position 209 is a phosphoserine (Ser209). Residue Thr244 is modified to Phosphothreonine. A compositionally biased stretch (basic and acidic residues) spans 263–273; it reads RSSEEPTEKEP. Lys280 is covalently cross-linked (Glycyl lysine isopeptide (Lys-Gly) (interchain with G-Cter in SUMO2)). Residues 318-327 show a composition bias toward low complexity; the sequence is VQAQVQSQTQ. Polar residues predominate over residues 328–351; that stretch reads PRIPSTDTQVQPKLQKQAQTQTSP. A Glycyl lysine isopeptide (Lys-Gly) (interchain with G-Cter in SUMO2) cross-link involves residue Lys340. Ser350 is modified (phosphoserine). A compositionally biased stretch (low complexity) spans 355-383; the sequence is VLQQKQVQPQLQQEAEPQKQVQPQVQPQA. A compositionally biased stretch (polar residues) spans 384-395; the sequence is HSQGPRQVQLQQ. A Glycyl lysine isopeptide (Lys-Gly) (interchain with G-Cter in SUMO2) cross-link involves residue Lys401. Over residues 402-435 the composition is skewed to low complexity; sequence QVQPQVQPQAHSQPPRQVQLQLQKQVQTQTYPQV. Over residues 436–445 the composition is skewed to polar residues; sequence HTQAQPSVQP. Phosphoserine is present on Ser547. A Glycyl lysine isopeptide (Lys-Gly) (interchain with G-Cter in SUMO2) cross-link involves residue Lys549. The segment at 562–584 is disordered; it reads STVPLTPVPRPSDSVSSTPAATS. The residue at position 567 (Thr567) is a Phosphothreonine. A compositionally biased stretch (low complexity) spans 572 to 584; sequence PSDSVSSTPAATS. Residues Lys588, Lys680, and Lys705 each participate in a glycyl lysine isopeptide (Lys-Gly) (interchain with G-Cter in SUMO2) cross-link. A Matrin-type zinc finger spans residues 799-830; that stretch reads YICRICHKFYHSNSGAQLSHCKSLGHFENLQK. A Phosphoserine modification is found at Ser821. Lys830 is covalently cross-linked (Glycyl lysine isopeptide (Lys-Gly) (interchain with G-Cter in SUMO2)). Residue Ser838 is modified to Phosphoserine. Polar residues predominate over residues 859-879; that stretch reads LFTSSGRPPSQPNTQDKTPSK. Positions 859 to 898 are disordered; the sequence is LFTSSGRPPSQPNTQDKTPSKVTARPSQPPLPRRSTRLKT. Residue Lys879 forms a Glycyl lysine isopeptide (Lys-Gly) (interchain with G-Cter in SUMO2) linkage.

As to quaternary structure, interacts with CIP/WAF1.

The protein resides in the nucleus. Its function is as follows. May regulate the subcellular localization of CIP/WAF1. This is Cip1-interacting zinc finger protein (CIZ1) from Homo sapiens (Human).